We begin with the raw amino-acid sequence, 132 residues long: Small ribosomal subunit protein uS11 (132 aa).

It belongs to the universal ribosomal protein uS11 family. As to quaternary structure, part of the 30S ribosomal subunit. Interacts with proteins S7 and S18. Binds to IF-3.

Its function is as follows. Located on the platform of the 30S subunit, it bridges several disparate RNA helices of the 16S rRNA. Forms part of the Shine-Dalgarno cleft in the 70S ribosome. The polypeptide is Small ribosomal subunit protein uS11 (Leifsonia xyli subsp. xyli (strain CTCB07)).